The chain runs to 318 residues: Lipoyl synthase (318 aa).

[4Fe-4S] cluster-binding residues include Cys-64, Cys-69, Cys-75, Cys-90, Cys-94, Cys-97, and Ser-304. The region spanning 76–293 (FSGGTATFMI…AEEGYKMGFK (218 aa)) is the Radical SAM core domain.

It belongs to the radical SAM superfamily. Lipoyl synthase family. The cofactor is [4Fe-4S] cluster.

The protein localises to the cytoplasm. The catalysed reaction is [[Fe-S] cluster scaffold protein carrying a second [4Fe-4S](2+) cluster] + N(6)-octanoyl-L-lysyl-[protein] + 2 oxidized [2Fe-2S]-[ferredoxin] + 2 S-adenosyl-L-methionine + 4 H(+) = [[Fe-S] cluster scaffold protein] + N(6)-[(R)-dihydrolipoyl]-L-lysyl-[protein] + 4 Fe(3+) + 2 hydrogen sulfide + 2 5'-deoxyadenosine + 2 L-methionine + 2 reduced [2Fe-2S]-[ferredoxin]. Its pathway is protein modification; protein lipoylation via endogenous pathway; protein N(6)-(lipoyl)lysine from octanoyl-[acyl-carrier-protein]: step 2/2. In terms of biological role, catalyzes the radical-mediated insertion of two sulfur atoms into the C-6 and C-8 positions of the octanoyl moiety bound to the lipoyl domains of lipoate-dependent enzymes, thereby converting the octanoylated domains into lipoylated derivatives. This Pseudomonas syringae pv. tomato (strain ATCC BAA-871 / DC3000) protein is Lipoyl synthase.